The chain runs to 164 residues: Cyclic pyranopterin monophosphate synthase (164 aa).

Residues 73 to 75 and 111 to 112 contribute to the substrate site; these read LCH and ME. Aspartate 126 is an active-site residue.

The protein belongs to the MoaC family. In terms of assembly, homohexamer; trimer of dimers.

It catalyses the reaction (8S)-3',8-cyclo-7,8-dihydroguanosine 5'-triphosphate = cyclic pyranopterin phosphate + diphosphate. Its pathway is cofactor biosynthesis; molybdopterin biosynthesis. Catalyzes the conversion of (8S)-3',8-cyclo-7,8-dihydroguanosine 5'-triphosphate to cyclic pyranopterin monophosphate (cPMP). This is Cyclic pyranopterin monophosphate synthase from Herpetosiphon aurantiacus (strain ATCC 23779 / DSM 785 / 114-95).